The chain runs to 285 residues: Bifunctional protein FolD (285 aa).

Residues 163 to 165 (GRS) and Ser188 contribute to the NADP(+) site.

The protein belongs to the tetrahydrofolate dehydrogenase/cyclohydrolase family. As to quaternary structure, homodimer.

It carries out the reaction (6R)-5,10-methylene-5,6,7,8-tetrahydrofolate + NADP(+) = (6R)-5,10-methenyltetrahydrofolate + NADPH. The enzyme catalyses (6R)-5,10-methenyltetrahydrofolate + H2O = (6R)-10-formyltetrahydrofolate + H(+). The protein operates within one-carbon metabolism; tetrahydrofolate interconversion. Catalyzes the oxidation of 5,10-methylenetetrahydrofolate to 5,10-methenyltetrahydrofolate and then the hydrolysis of 5,10-methenyltetrahydrofolate to 10-formyltetrahydrofolate. The chain is Bifunctional protein FolD from Lactococcus lactis subsp. cremoris (strain MG1363).